The chain runs to 139 residues: Natriuretic peptide Mc-NP (139 aa).

Residues 1-25 form the signal peptide; that stretch reads MVGLSRLRGGGLLLVLALLPLALDG. A propeptide spanning residues 26 to 75 is cleaved from the precursor; the sequence is KPLEEAPTAPSRIIPFSRPVRKQSQAVLDPMVHPERPAGSGDDGDSRRLE. Positions 45 to 72 are disordered; that stretch reads VRKQSQAVLDPMVHPERPAGSGDDGDSR. A disulfide bond links Cys86 and Cys102. Residues 117–139 constitute a propeptide that is removed on maturation; the sequence is IIPFSRPVRKESRAALDRMQQPG.

The protein belongs to the natriuretic peptide family. As to expression, expressed by the venom gland.

It localises to the secreted. Snake venom natriuretic peptide that dose-dependently induces the rapid relaxation of rat aortic strips phenylephrine-precontracted. Acts by stimulating cGMP production in a dose-dependent manner (by probably activating NPR1 and/or NPR2). May also show potent hypotensive effects. A synthetic peptide (AA 77-108, where the Cys-95 is replaced by a Ser) increases sodium excretion and urinary volume in rat kidneys. The protein is Natriuretic peptide Mc-NP of Micrurus corallinus (Brazilian coral snake).